A 727-amino-acid polypeptide reads, in one-letter code: Non-structural protein 4 (727 aa).

Disordered stretches follow at residues 1 to 38 (MNQS…PSEG) and 673 to 727 (SMTL…KLSK). Polar residues predominate over residues 17-38 (RTPSALSSNSETPGSMSSPSEG). Positions 712 to 727 (SRRKARKARAASKLSK) are enriched in basic residues.

This is Non-structural protein 4 from Rice dwarf virus (isolate Akita) (RDV).